We begin with the raw amino-acid sequence, 114 residues long: T cell receptor alpha variable 12-3 (114 aa).

An N-terminal signal peptide occupies residues 1–21 (MMKSLRVLLVILWLQLSWVWS). In terms of domain architecture, Ig-like spans 24–114 (KEVEQDPGPL…DSATYLCAMS (91 aa)). N-linked (GlcNAc...) asparagine glycosylation is present at Asn44. Cys45 and Cys111 form a disulfide bridge.

In terms of assembly, alpha-beta TR is a heterodimer composed of an alpha and beta chain; disulfide-linked. The alpha-beta TR is associated with the transmembrane signaling CD3 coreceptor proteins to form the TR-CD3 (TcR or TCR). The assembly of alpha-beta TR heterodimers with CD3 occurs in the endoplasmic reticulum where a single alpha-beta TR heterodimer associates with one CD3D-CD3E heterodimer, one CD3G-CD3E heterodimer and one CD247 homodimer forming a stable octameric structure. CD3D-CD3E and CD3G-CD3E heterodimers preferentially associate with TR alpha and TR beta chains, respectively. The association of the CD247 homodimer is the last step of TcR assembly in the endoplasmic reticulum and is required for transport to the cell surface.

The protein resides in the cell membrane. V region of the variable domain of T cell receptor (TR) alpha chain that participates in the antigen recognition. Alpha-beta T cell receptors are antigen specific receptors which are essential to the immune response and are present on the cell surface of T lymphocytes. Recognize peptide-major histocompatibility (MH) (pMH) complexes that are displayed by antigen presenting cells (APC), a prerequisite for efficient T cell adaptive immunity against pathogens. Binding of alpha-beta TR to pMH complex initiates TR-CD3 clustering on the cell surface and intracellular activation of LCK that phosphorylates the ITAM motifs of CD3G, CD3D, CD3E and CD247 enabling the recruitment of ZAP70. In turn ZAP70 phosphorylates LAT, which recruits numerous signaling molecules to form the LAT signalosome. The LAT signalosome propagates signal branching to three major signaling pathways, the calcium, the mitogen-activated protein kinase (MAPK) kinase and the nuclear factor NF-kappa-B (NF-kB) pathways, leading to the mobilization of transcription factors that are critical for gene expression and essential for T cell growth and differentiation. The T cell repertoire is generated in the thymus, by V-(D)-J rearrangement. This repertoire is then shaped by intrathymic selection events to generate a peripheral T cell pool of self-MH restricted, non-autoaggressive T cells. Post-thymic interaction of alpha-beta TR with the pMH complexes shapes TR structural and functional avidity. This chain is T cell receptor alpha variable 12-3, found in Homo sapiens (Human).